Here is a 582-residue protein sequence, read N- to C-terminus: Protein NRT1/ PTR FAMILY 5.2 (582 aa).

A run of 11 helical transmembrane segments spans residues 77–97, 100–120, 141–161, 189–209, 217–237, 334–354, 370–390, 408–428, 452–472, 493–515, and 538–558; these read WVGT…ALLG, ITFV…TLSV, ASVL…IGTG, FFNW…TVLV, WTLG…IFLL, PVLF…TLFV, IPPA…IVLY, ITLL…MIVA, LPLT…ADSF, GTSY…LSTV, and YYYL…LVVV.

This sequence belongs to the major facilitator superfamily. Proton-dependent oligopeptide transporter (POT/PTR) (TC 2.A.17) family. As to expression, expressed in roots. Detected in shoots, leaves and flowers.

It localises to the membrane. Peptide transporter involved in stress tolerance in seeds during germination and in defense against virulent bacterial pathogens. This is Protein NRT1/ PTR FAMILY 5.2 (NPF5.2) from Arabidopsis thaliana (Mouse-ear cress).